The sequence spans 98 residues: NADH-ubiquinone oxidoreductase chain 4L (98 aa).

3 helical membrane passes run 1 to 21 (MSLT…GLLM), 29 to 49 (SLLC…MAIL), and 61 to 81 (IILL…LVMV).

The protein belongs to the complex I subunit 4L family. Core subunit of respiratory chain NADH dehydrogenase (Complex I) which is composed of 45 different subunits.

The protein localises to the mitochondrion inner membrane. The enzyme catalyses a ubiquinone + NADH + 5 H(+)(in) = a ubiquinol + NAD(+) + 4 H(+)(out). Functionally, core subunit of the mitochondrial membrane respiratory chain NADH dehydrogenase (Complex I) which catalyzes electron transfer from NADH through the respiratory chain, using ubiquinone as an electron acceptor. Part of the enzyme membrane arm which is embedded in the lipid bilayer and involved in proton translocation. This Vampyressa melissa (Melissa's yellow-eared bat) protein is NADH-ubiquinone oxidoreductase chain 4L (MT-ND4L).